Here is a 460-residue protein sequence, read N- to C-terminus: Cysteine--tRNA ligase (460 aa).

Zn(2+) is bound at residue Cys29. The 'HIGH' region motif lies at 31–41 (PTVYDFAHIGN). The Zn(2+) site is built by Cys227, His252, and Glu256. Residues 285 to 289 (KMSKS) carry the 'KMSKS' region motif. Lys288 serves as a coordination point for ATP.

The protein belongs to the class-I aminoacyl-tRNA synthetase family. Monomer. Requires Zn(2+) as cofactor.

Its subcellular location is the cytoplasm. It carries out the reaction tRNA(Cys) + L-cysteine + ATP = L-cysteinyl-tRNA(Cys) + AMP + diphosphate. The chain is Cysteine--tRNA ligase from Bradyrhizobium diazoefficiens (strain JCM 10833 / BCRC 13528 / IAM 13628 / NBRC 14792 / USDA 110).